We begin with the raw amino-acid sequence, 47 residues long: Protein 0.5 (47 aa).

The first 23 residues, 1-23 (MYMLTIGLLTALGLAVGASFGKA), serve as a signal peptide directing secretion. A helical transmembrane segment spans residues 24-43 (LGVAVGSYFTACIIIGIIKG).

The protein localises to the host membrane. This Escherichia phage T7 (Bacteriophage T7) protein is Protein 0.5.